The following is a 642-amino-acid chain: Serine/threonine-protein kinase pakA (642 aa).

2 stretches are compositionally biased toward polar residues: residues 1–12 (MSLKKQQQQSDF) and 38–48 (LRQSASFTALN). The disordered stretch occupies residues 1 to 82 (MSLKKQQQQS…GFGTKPRRKN (82 aa)). Positions 100-113 (ISAPENPVHVTHVG) constitute a CRIB domain. Disordered stretches follow at residues 180-276 (GEYP…PIPE) and 317-338 (QLDR…RTRQ). 2 stretches are compositionally biased toward low complexity: residues 217–227 (SQSSPVPVLSS) and 254–266 (VVSN…RPAN). In terms of domain architecture, Protein kinase spans 361-612 (YYNLNKIGQG…AHDLLKHPFM (252 aa)). ATP is bound by residues 367–375 (IGQGASGGV) and Lys-390. Asp-480 (proton acceptor) is an active-site residue.

It belongs to the protein kinase superfamily. STE Ser/Thr protein kinase family. STE20 subfamily.

The protein localises to the cytoplasm. It is found in the nucleus. It catalyses the reaction L-seryl-[protein] + ATP = O-phospho-L-seryl-[protein] + ADP + H(+). The catalysed reaction is L-threonyl-[protein] + ATP = O-phospho-L-threonyl-[protein] + ADP + H(+). MAP4K component of the MAPK pathway required for the mating pheromone response and the regulation of cell polarity and cell cycle. This chain is Serine/threonine-protein kinase pakA (pakA), found in Talaromyces marneffei (Penicillium marneffei).